The following is a 541-amino-acid chain: Protein yellow (541 aa).

Residues 1 to 21 form the signal peptide; sequence MFQDKGWILVTLITLVTPSWA. Asn144 and Asn215 each carry an N-linked (GlcNAc...) asparagine glycan. A disordered region spans residues 443–463; sequence QKPQTSWASSPPPPSRTYLPA.

The protein belongs to the major royal jelly protein family.

It localises to the secreted. Functionally, controls the pigmentation pattern of the adult cuticle and larval mouth parts. The polypeptide is Protein yellow (y) (Drosophila melanogaster (Fruit fly)).